Reading from the N-terminus, the 404-residue chain is Cytochrome P450 monooxygenase avaI (404 aa).

Position 382 (C382) interacts with heme.

It belongs to the cytochrome P450 family. The cofactor is heme.

It participates in secondary metabolite biosynthesis. Cytochrome P450 monooxygenase; part of the cluster that mediates the biosynthesis of a highly modified cyclo-arginine-tryptophan dipeptide (cRW). The first step of the pathway is perfornmed by the arginine-containing cyclodipeptide synthase (RCPDS) avaA that acts as the scaffold-generating enzyme and is responsible for formation of the cyclo-Arg-Trp (cRW) diketopiperazine. AvaB then acts as a multifunctional flavoenzyme that is responsible for generating the cyclo-Arg-formylkynurenine DKP, which can be deformylated by avaC. AvaB then further catalyzes an additional N-oxidation followed by cyclization and dehydration. The next step is an N-acetylation of the guanidine group catalyzed by the arginine N-acetyltransferase avaD. The roles of the additional enzymes identified within the ava cluster still have to be determined. This chain is Cytochrome P450 monooxygenase avaI, found in Aspergillus versicolor.